Reading from the N-terminus, the 174-residue chain is Ribosome rescue factor SmrB (174 aa).

The Smr domain maps to 96–171 (LDLHGLTQQQ…GDAAILVLIE (76 aa)).

The protein belongs to the SmrB family. Associates with collided ribosomes, but not with correctly translating polysomes.

In terms of biological role, acts as a ribosome collision sensor. Detects stalled/collided disomes (pairs of ribosomes where the leading ribosome is stalled and a second ribosome has collided with it) and endonucleolytically cleaves mRNA at the 5' boundary of the stalled ribosome. Stalled/collided disomes form a new interface (primarily via the 30S subunits) that binds SmrB. Cleaved mRNA becomes available for tmRNA ligation, leading to ribosomal subunit dissociation and rescue of stalled ribosomes. The sequence is that of Ribosome rescue factor SmrB from Tolumonas auensis (strain DSM 9187 / NBRC 110442 / TA 4).